Here is an 85-residue protein sequence, read N- to C-terminus: Latartoxin-1a (85 aa).

Positions 1–19 are cleaved as a signal peptide; that stretch reads MKVLVFAIVCSVLLQVVLS. Residues 20–25 constitute a propeptide, removed in mature form; it reads ADEEAR. The short motif at 22–25 is the Processing quadruplet motif element; sequence EEAR. 4 cysteine pairs are disulfide-bonded: C27–C42, C34–C47, C41–C64, and C49–C62.

This sequence belongs to the neurotoxin 19 (CSTX) family. Post-translationally, contains 4 disulfide bonds. In terms of processing, cleavage of the propeptide depends on the processing quadruplet motif (XXXR, with at least one of X being E). Expressed by the venom gland.

It localises to the secreted. Insect toxin. Causes paralysis in larvae of C.vicina by depolarizing membranes at the neuromuscular junction. This chain is Latartoxin-1a, found in Lachesana tarabaevi (Spider).